An 89-amino-acid polypeptide reads, in one-letter code: uncharacterized protein (89 aa).

This sequence to M.jannaschii MJ1436.

This is an uncharacterized protein from Methanothermobacter thermautotrophicus (strain ATCC 29096 / DSM 1053 / JCM 10044 / NBRC 100330 / Delta H) (Methanobacterium thermoautotrophicum).